The primary structure comprises 577 residues: Aspartate--tRNA ligase (577 aa).

Glu-171 provides a ligand contact to L-aspartate. Residues 195–198 (QLFK) are aspartate. Position 217 (Arg-217) interacts with L-aspartate. ATP-binding positions include 217–219 (RDE) and Gln-226. His-437 is an L-aspartate binding site. Position 472 (Glu-472) interacts with ATP. Arg-479 provides a ligand contact to L-aspartate. An ATP-binding site is contributed by 524–527 (GFDR).

The protein belongs to the class-II aminoacyl-tRNA synthetase family. Type 1 subfamily. In terms of assembly, homodimer.

The protein resides in the cytoplasm. The enzyme catalyses tRNA(Asp) + L-aspartate + ATP = L-aspartyl-tRNA(Asp) + AMP + diphosphate. Its function is as follows. Catalyzes the attachment of L-aspartate to tRNA(Asp) in a two-step reaction: L-aspartate is first activated by ATP to form Asp-AMP and then transferred to the acceptor end of tRNA(Asp). The chain is Aspartate--tRNA ligase from Deinococcus deserti (strain DSM 17065 / CIP 109153 / LMG 22923 / VCD115).